We begin with the raw amino-acid sequence, 423 residues long: MDGLMWATRILCLLSLCGVTLGHLHLECDFITQLRDDELACLQAAEGTNNTSLGCPGTWDGLLCWPPTGSGQWVSLPCPEFFSHFGSDTGFVKRDCTITGWSNPFPPYPVACPVPLELLTKEKSYFSTVKIIYTTGHSISIVALCVAIAILVALRRLHCPRNYIHTQLFATFILKASAVFLKDAAIFQGDSTDHCSMSTVLCKVSVAISHLATMTNFSWLLAEAVYLSCLLASTSPRSKPAFWWLVLAGWGLPVLCTGTWVGCKLAFEDTECWDLDNSSPCWWIIKGPIVLSVGVNFGLFLNIICILLRKLEPAQGGLHTRAQYWRLSKSTLLLIPLFGIHYIIFNFLPDSAGLDIRVPLELGLGSFQGFIVAVLYCFLNQEVRTEISRKWYGHDPELLPARRTCTEWTTPPRSRLKVLTSEC.

Positions 1-22 (MDGLMWATRILCLLSLCGVTLG) are cleaved as a signal peptide. At 23-130 (HLHLECDFIT…KEKSYFSTVK (108 aa)) the chain is on the extracellular side. 3 cysteine pairs are disulfide-bonded: Cys-41-Cys-64, Cys-55-Cys-96, and Cys-78-Cys-112. N-linked (GlcNAc...) asparagine glycosylation is found at Asn-49 and Asn-50. A helical transmembrane segment spans residues 131-151 (IIYTTGHSISIVALCVAIAIL). The Cytoplasmic segment spans residues 152–167 (VALRRLHCPRNYIHTQ). The chain crosses the membrane as a helical span at residues 168–188 (LFATFILKASAVFLKDAAIFQ). The Extracellular segment spans residues 189–210 (GDSTDHCSMSTVLCKVSVAISH). Residues 211–231 (LATMTNFSWLLAEAVYLSCLL) traverse the membrane as a helical segment. The Cytoplasmic portion of the chain corresponds to 232–240 (ASTSPRSKP). A helical membrane pass occupies residues 241–261 (AFWWLVLAGWGLPVLCTGTWV). The Extracellular portion of the chain corresponds to 262–283 (GCKLAFEDTECWDLDNSSPCWW). Residues 284–304 (IIKGPIVLSVGVNFGLFLNII) form a helical membrane-spanning segment. Topologically, residues 305 to 331 (CILLRKLEPAQGGLHTRAQYWRLSKST) are cytoplasmic. The chain crosses the membrane as a helical span at residues 332-352 (LLLIPLFGIHYIIFNFLPDSA). The Extracellular portion of the chain corresponds to 353 to 357 (GLDIR). The chain crosses the membrane as a helical span at residues 358–378 (VPLELGLGSFQGFIVAVLYCF). Residues 379–423 (LNQEVRTEISRKWYGHDPELLPARRTCTEWTTPPRSRLKVLTSEC) lie on the Cytoplasmic side of the membrane.

It belongs to the G-protein coupled receptor 2 family. In terms of tissue distribution, pituitary gland.

The protein localises to the cell membrane. In terms of biological role, receptor for GRF, coupled to G proteins which activate adenylyl cyclase. Stimulates somatotroph cell growth, growth hormone gene transcription and growth hormone secretion. The polypeptide is Growth hormone-releasing hormone receptor (Ghrhr) (Mus musculus (Mouse)).